The primary structure comprises 643 residues: MNANPKFLSADARVDAAAVAPLPNSRKVYVTGSQPDIRVPMREITQADTPTSFGGEKNPPIYVYDTSGPYTDPDAKIDIRAGLPALRQRWIDARGDTETLAGLTSDYGRERAADPATAELRFPGLHRHPRRAKAGKNVTQMHYARQGIITPEMEYIAIRENQRRAEYLESLKASGPNGAKLAAMMGRQHAGQAFGAAAFGANAPAEITPEFVRDEVARGRAIIPANINHPETEPMIIGRNFLVKINANIGNSAVTSSIGEEVDKMTWAIRWGGDTVMDLSTGKHIHETREWIIRNSPVPIGTVPIYQALEKVNGKAEDLTWEIFRDTLIEQAEQGVDYFTIHAGVRLQYVPLTANRMTGIVSRGGSIMAKWCLAHHKESFLYEHFEEICEIMKAYDVSFSLGDGLRPGSIYDANDEAQLGELKTLGELTQIAWKHDVQVMIEGPGHVPMQLIKENMDLQLDWCKEAPFYTLGPLTTDIAPGYDHITSGIGAAMIGWFGTAMLCYVTPKEHLGLPNKDDVKEGIITYKLAAHAADLAKGHPGAQVRDNALSKARFEFRWQDQFNLGLDPDKAREFHDETLPKDSAKVAHFCSMCGPHFCSMKITQDVREFAAQQGVSENDALKKGMEVKAVEFVKSGSEIYHRQ.

Substrate-binding positions include N248, M277, Y306, H342, 362 to 364, 403 to 406, and E442; these read SRG and DGLR. H446 is a binding site for Zn(2+). Y469 is a binding site for substrate. Zn(2+) is bound at residue H510. Positions 590, 593, and 598 each coordinate [4Fe-4S] cluster.

It belongs to the ThiC family. As to quaternary structure, homodimer. [4Fe-4S] cluster is required as a cofactor.

It carries out the reaction 5-amino-1-(5-phospho-beta-D-ribosyl)imidazole + S-adenosyl-L-methionine = 4-amino-2-methyl-5-(phosphooxymethyl)pyrimidine + CO + 5'-deoxyadenosine + formate + L-methionine + 3 H(+). It participates in cofactor biosynthesis; thiamine diphosphate biosynthesis. Its function is as follows. Catalyzes the synthesis of the hydroxymethylpyrimidine phosphate (HMP-P) moiety of thiamine from aminoimidazole ribotide (AIR) in a radical S-adenosyl-L-methionine (SAM)-dependent reaction. The chain is Phosphomethylpyrimidine synthase from Burkholderia pseudomallei (strain 1106a).